The sequence spans 276 residues: Dermonecrotic toxin LdSicTox-alphaIB2 (276 aa).

His5 is an active-site residue. Glu25 and Asp27 together coordinate Mg(2+). His41 functions as the Nucleophile in the catalytic mechanism. Intrachain disulfides connect Cys45–Cys51 and Cys47–Cys190. Asp85 contacts Mg(2+). N-linked (GlcNAc...) asparagine glycosylation is present at Asn253.

Belongs to the arthropod phospholipase D family. Class II subfamily. Requires Mg(2+) as cofactor. In terms of tissue distribution, expressed by the venom gland.

Its subcellular location is the secreted. The enzyme catalyses an N-(acyl)-sphingosylphosphocholine = an N-(acyl)-sphingosyl-1,3-cyclic phosphate + choline. The catalysed reaction is an N-(acyl)-sphingosylphosphoethanolamine = an N-(acyl)-sphingosyl-1,3-cyclic phosphate + ethanolamine. It catalyses the reaction a 1-acyl-sn-glycero-3-phosphocholine = a 1-acyl-sn-glycero-2,3-cyclic phosphate + choline. It carries out the reaction a 1-acyl-sn-glycero-3-phosphoethanolamine = a 1-acyl-sn-glycero-2,3-cyclic phosphate + ethanolamine. In terms of biological role, dermonecrotic toxins cleave the phosphodiester linkage between the phosphate and headgroup of certain phospholipids (sphingolipid and lysolipid substrates), forming an alcohol (often choline) and a cyclic phosphate. This toxin acts on sphingomyelin (SM). It may also act on ceramide phosphoethanolamine (CPE), lysophosphatidylcholine (LPC) and lysophosphatidylethanolamine (LPE), but not on lysophosphatidylserine (LPS), and lysophosphatidylglycerol (LPG). It acts by transphosphatidylation, releasing exclusively cyclic phosphate products as second products. Induces dermonecrosis, hemolysis, increased vascular permeability, edema, inflammatory response, and platelet aggregation. This Loxosceles deserta (Desert recluse spider) protein is Dermonecrotic toxin LdSicTox-alphaIB2.